The primary structure comprises 227 residues: Thiamine-phosphate synthase (227 aa).

Residues 46-50 (QLRDK) and Asn87 each bind 4-amino-2-methyl-5-(diphosphooxymethyl)pyrimidine. Residues Asp88 and Asp107 each contribute to the Mg(2+) site. Ser126 is a binding site for 4-amino-2-methyl-5-(diphosphooxymethyl)pyrimidine. 152-154 (TPT) lines the 2-[(2R,5Z)-2-carboxy-4-methylthiazol-5(2H)-ylidene]ethyl phosphate pocket. 4-amino-2-methyl-5-(diphosphooxymethyl)pyrimidine is bound at residue Lys155. Gly183 is a 2-[(2R,5Z)-2-carboxy-4-methylthiazol-5(2H)-ylidene]ethyl phosphate binding site.

It belongs to the thiamine-phosphate synthase family. Requires Mg(2+) as cofactor.

The enzyme catalyses 2-[(2R,5Z)-2-carboxy-4-methylthiazol-5(2H)-ylidene]ethyl phosphate + 4-amino-2-methyl-5-(diphosphooxymethyl)pyrimidine + 2 H(+) = thiamine phosphate + CO2 + diphosphate. It carries out the reaction 2-(2-carboxy-4-methylthiazol-5-yl)ethyl phosphate + 4-amino-2-methyl-5-(diphosphooxymethyl)pyrimidine + 2 H(+) = thiamine phosphate + CO2 + diphosphate. The catalysed reaction is 4-methyl-5-(2-phosphooxyethyl)-thiazole + 4-amino-2-methyl-5-(diphosphooxymethyl)pyrimidine + H(+) = thiamine phosphate + diphosphate. The protein operates within cofactor biosynthesis; thiamine diphosphate biosynthesis; thiamine phosphate from 4-amino-2-methyl-5-diphosphomethylpyrimidine and 4-methyl-5-(2-phosphoethyl)-thiazole: step 1/1. In terms of biological role, condenses 4-methyl-5-(beta-hydroxyethyl)thiazole monophosphate (THZ-P) and 2-methyl-4-amino-5-hydroxymethyl pyrimidine pyrophosphate (HMP-PP) to form thiamine monophosphate (TMP). This Mycolicibacterium smegmatis (strain ATCC 700084 / mc(2)155) (Mycobacterium smegmatis) protein is Thiamine-phosphate synthase.